A 419-amino-acid polypeptide reads, in one-letter code: UDP-N-acetylglucosamine 1-carboxyvinyltransferase 2 (419 aa).

Position 24–25 (24–25) interacts with phosphoenolpyruvate; it reads KN. Residue arginine 94 coordinates UDP-N-acetyl-alpha-D-glucosamine. Cysteine 118 (proton donor) is an active-site residue. Cysteine 118 carries the post-translational modification 2-(S-cysteinyl)pyruvic acid O-phosphothioketal. UDP-N-acetyl-alpha-D-glucosamine-binding positions include 123–127, aspartate 307, and isoleucine 329; that span reads RPIDQ.

This sequence belongs to the EPSP synthase family. MurA subfamily.

Its subcellular location is the cytoplasm. It catalyses the reaction phosphoenolpyruvate + UDP-N-acetyl-alpha-D-glucosamine = UDP-N-acetyl-3-O-(1-carboxyvinyl)-alpha-D-glucosamine + phosphate. The protein operates within cell wall biogenesis; peptidoglycan biosynthesis. Functionally, cell wall formation. Adds enolpyruvyl to UDP-N-acetylglucosamine. This Staphylococcus aureus (strain bovine RF122 / ET3-1) protein is UDP-N-acetylglucosamine 1-carboxyvinyltransferase 2.